The chain runs to 180 residues: Ribulose bisphosphate carboxylase small subunit, chloroplastic 3 (180 aa).

The N-terminal 56 residues, 1-56 (MASSLMSNAITAVVGASGAQANMVAPFNGLKSIASFPVTRKSNDITSIASNGGRVQ), are a transit peptide targeting the chloroplast.

This sequence belongs to the RuBisCO small chain family. Heterohexadecamer of 8 large and 8 small subunits.

The protein localises to the plastid. The protein resides in the chloroplast. In terms of biological role, ruBisCO catalyzes two reactions: the carboxylation of D-ribulose 1,5-bisphosphate, the primary event in carbon dioxide fixation, as well as the oxidative fragmentation of the pentose substrate. Both reactions occur simultaneously and in competition at the same active site. Although the small subunit is not catalytic it is essential for maximal activity. The protein is Ribulose bisphosphate carboxylase small subunit, chloroplastic 3 of Amaranthus hypochondriacus (Prince-of-Wales feather).